The primary structure comprises 162 residues: UPF0178 protein Rsph17029_2512 (162 aa).

It belongs to the UPF0178 family.

This is UPF0178 protein Rsph17029_2512 from Cereibacter sphaeroides (strain ATCC 17029 / ATH 2.4.9) (Rhodobacter sphaeroides).